The sequence spans 160 residues: Suppressyn (160 aa).

Residues 1 to 39 (MACIYPTTFYTSLPTKSLNMGISLTTILILSVAVLLSTA) form the signal peptide. Positions 137 to 160 (AKASKPTTPPENRPRHFHSFIQKL) are disordered.

Interacts (secreted) with SLC1A5; mainly at cell surface. In terms of tissue distribution, specifically expressed in placenta by extravillous trophoblasts and syncytiotrophoblasts (at protein level).

It localises to the secreted. Its function is as follows. May play a role in trophoblasts syncytialization, the spontaneous fusion of their plasma membranes, an essential process in placental development. May negatively regulate cell-cell fusion by interacting with SLC1A5, the probable receptor on the cell surface of the fusogenic syncytin-1/ERVW-1. The chain is Suppressyn (ERVH48-1) from Homo sapiens (Human).